Here is a 150-residue protein sequence, read N- to C-terminus: UPF0178 protein Maqu_2186 (150 aa).

Belongs to the UPF0178 family.

In Marinobacter nauticus (strain ATCC 700491 / DSM 11845 / VT8) (Marinobacter aquaeolei), this protein is UPF0178 protein Maqu_2186.